Here is a 335-residue protein sequence, read N- to C-terminus: Anthranilate phosphoribosyltransferase (335 aa).

Residues glycine 79, 82–83 (GD), threonine 87, 89–92 (NVST), 107–115 (KHGSRSVSS), and serine 119 each bind 5-phospho-alpha-D-ribose 1-diphosphate. Glycine 79 is a binding site for anthranilate. Serine 91 provides a ligand contact to Mg(2+). Arginine 165 contacts anthranilate. The Mg(2+) site is built by aspartate 223 and glutamate 224.

This sequence belongs to the anthranilate phosphoribosyltransferase family. Homodimer. Requires Mg(2+) as cofactor.

It catalyses the reaction N-(5-phospho-beta-D-ribosyl)anthranilate + diphosphate = 5-phospho-alpha-D-ribose 1-diphosphate + anthranilate. It functions in the pathway amino-acid biosynthesis; L-tryptophan biosynthesis; L-tryptophan from chorismate: step 2/5. Functionally, catalyzes the transfer of the phosphoribosyl group of 5-phosphorylribose-1-pyrophosphate (PRPP) to anthranilate to yield N-(5'-phosphoribosyl)-anthranilate (PRA). The chain is Anthranilate phosphoribosyltransferase from Helicobacter pylori (strain HPAG1).